The primary structure comprises 264 residues: Tryptophan synthase alpha chain (264 aa).

Catalysis depends on proton acceptor residues Glu44 and Asp55.

Belongs to the TrpA family. In terms of assembly, tetramer of two alpha and two beta chains.

It carries out the reaction (1S,2R)-1-C-(indol-3-yl)glycerol 3-phosphate + L-serine = D-glyceraldehyde 3-phosphate + L-tryptophan + H2O. It participates in amino-acid biosynthesis; L-tryptophan biosynthesis; L-tryptophan from chorismate: step 5/5. Functionally, the alpha subunit is responsible for the aldol cleavage of indoleglycerol phosphate to indole and glyceraldehyde 3-phosphate. This is Tryptophan synthase alpha chain from Lactiplantibacillus plantarum (strain ATCC BAA-793 / NCIMB 8826 / WCFS1) (Lactobacillus plantarum).